The chain runs to 287 residues: Ribosomal RNA-processing protein 8 (287 aa).

The interval 1-62 (MTTEENKTSR…SAPSKRPKPS (62 aa)) is disordered. A compositionally biased stretch (basic residues) spans 9 to 21 (SRNRKRKRQRNPK). A compositionally biased stretch (basic and acidic residues) spans 35-46 (QNEKKNQRDTKN). His107, Gly142, Asp160, Asp172, Met173, and Cys189 together coordinate S-adenosyl-L-methionine.

Belongs to the methyltransferase superfamily. RRP8 family.

The protein localises to the nucleus. It is found in the nucleolus. Its function is as follows. Probable methyltransferase required to silence rDNA. This chain is Ribosomal RNA-processing protein 8, found in Arabidopsis thaliana (Mouse-ear cress).